A 269-amino-acid chain; its full sequence is 15-hydroxyprostaglandin dehydrogenase [NAD(+)] (269 aa).

NAD(+) is bound by residues 12–20 (GAAQGIGKA), 36–37 (DW), 63–65 (CDV), and N91. Substrate contacts are provided by S138 and Q148. Y151 (proton acceptor) is an active-site residue. NAD(+) is bound by residues 151–155 (YCASK) and 186–188 (VDT).

This sequence belongs to the short-chain dehydrogenases/reductases (SDR) family. In terms of assembly, homodimer. Expressed in proximal convoluted tubules of the kidney, where it colocalizes with the prostaglandin transporter SLC22A22 (at protein level). Expressed in lung, intestine, stomach and liver.

Its subcellular location is the cytoplasm. It catalyses the reaction prostaglandin E2 + NAD(+) = 15-oxoprostaglandin E2 + NADH + H(+). The enzyme catalyses (15S)-hydroxy-(5Z,8Z,11Z,13E)-eicosatetraenoate + NAD(+) = 15-oxo-(5Z,8Z,11Z,13E)-eicosatetraenoate + NADH + H(+). It carries out the reaction (11R)-hydroxy-(5Z,8Z,12E,14Z)-eicosatetraenoate + NAD(+) = 11-oxo-(5Z,8Z,12E,14Z)-eicosatetraenoate + NADH + H(+). The catalysed reaction is lipoxin A4 + NAD(+) = 15-oxo-(5S,6R)-dihydroxy-(7E,9E,11Z,13E)-eicosatetraenoate + NADH + H(+). It catalyses the reaction 15-oxo-(5S,6R)-dihydroxy-(7E,9E,11Z)-eicosatrienoate + NADH + H(+) = (5S,6R,15S)-trihydroxy-(7E,9E,11Z)-eicosatrienoate + NAD(+). The enzyme catalyses prostaglandin A1 + NAD(+) = 15-oxo-prostaglandin A1 + NADH + H(+). It carries out the reaction prostaglandin E1 + NAD(+) = 15-oxoprostaglandin E1 + NADH + H(+). The catalysed reaction is 14-hydroxy-(4Z,7Z,10Z,12E,16Z,19Z)-docosahexaenoate + NAD(+) = 14-oxo-(4Z,7Z,10Z,12E,16Z,19Z)-docosahexaenoate + NADH + H(+). It catalyses the reaction resolvin E1 + NAD(+) = 18-oxo-resolvin E1 + NADH + H(+). The enzyme catalyses resolvin D1 + NAD(+) = 8-oxoresolvin D1 + NADH + H(+). It carries out the reaction resolvin D1 + NAD(+) = 17-oxoresolvin D1 + NADH + H(+). The catalysed reaction is resolvin D2 + NAD(+) = 7-oxoresolvin D2 + NADH + H(+). It catalyses the reaction resolvin D2 + NAD(+) = 16-oxoresolvin D2 + NADH + H(+). Catalyzes the NAD-dependent dehydrogenation (oxidation) of a broad array of hydroxylated polyunsaturated fatty acids (mainly eicosanoids and docosanoids, including prostaglandins, lipoxins and resolvins), yielding their corresponding keto (oxo) metabolites. Decreases the levels of the pro-proliferative prostaglandins such as prostaglandin E2 (whose activity is increased in cancer because of an increase in the expression of cyclooxygenase 2) and generates oxo-fatty acid products that can profoundly influence cell function by abrogating pro-inflammatory cytokine expression. Converts resolvins E1, D1 and D2 to their oxo products, which represents a mode of resolvin inactivation. Resolvin E1 plays important roles during the resolution phase of acute inflammation, while resolvins D1 and D2 have a unique role in obesity-induced adipose inflammation. This is 15-hydroxyprostaglandin dehydrogenase [NAD(+)] (Hpgd) from Mus musculus (Mouse).